The chain runs to 212 residues: Spore germination lipase LipC (212 aa).

The Nucleophile role is filled by S11. Substrate is bound by residues G50 and N82. Catalysis depends on residues D186 and H189.

Belongs to the 'GDSL' lipolytic enzyme family.

It is found in the spore coat. Its function is as follows. Lipase involved in spore germination. This Bacillus licheniformis (strain ATCC 14580 / DSM 13 / JCM 2505 / CCUG 7422 / NBRC 12200 / NCIMB 9375 / NCTC 10341 / NRRL NRS-1264 / Gibson 46) protein is Spore germination lipase LipC (lipC).